A 315-amino-acid polypeptide reads, in one-letter code: DNA-directed RNA polymerase subunit alpha (315 aa).

The tract at residues 1–228 (MIEIEKPKVD…EHLNLFIDLT (228 aa)) is alpha N-terminal domain (alpha-NTD). The segment at 245-315 (KEKVLEMTIE…LGLGLKPSEE (71 aa)) is alpha C-terminal domain (alpha-CTD).

This sequence belongs to the RNA polymerase alpha chain family. Homodimer. The RNAP catalytic core consists of 2 alpha, 1 beta, 1 beta' and 1 omega subunit. When a sigma factor is associated with the core the holoenzyme is formed, which can initiate transcription.

It carries out the reaction RNA(n) + a ribonucleoside 5'-triphosphate = RNA(n+1) + diphosphate. In terms of biological role, DNA-dependent RNA polymerase catalyzes the transcription of DNA into RNA using the four ribonucleoside triphosphates as substrates. This Clostridioides difficile (strain 630) (Peptoclostridium difficile) protein is DNA-directed RNA polymerase subunit alpha.